The sequence spans 181 residues: Translation initiation factor IF-3 (181 aa).

The protein belongs to the IF-3 family. Monomer.

It is found in the cytoplasm. Its function is as follows. IF-3 binds to the 30S ribosomal subunit and shifts the equilibrium between 70S ribosomes and their 50S and 30S subunits in favor of the free subunits, thus enhancing the availability of 30S subunits on which protein synthesis initiation begins. This Mycoplasma capricolum subsp. capricolum (strain California kid / ATCC 27343 / NCTC 10154) protein is Translation initiation factor IF-3.